A 257-amino-acid chain; its full sequence is Trans-aconitate 2-methyltransferase (257 aa).

This sequence belongs to the methyltransferase superfamily. Tam family.

Its subcellular location is the cytoplasm. The catalysed reaction is trans-aconitate + S-adenosyl-L-methionine = (E)-3-(methoxycarbonyl)pent-2-enedioate + S-adenosyl-L-homocysteine. Functionally, catalyzes the S-adenosylmethionine monomethyl esterification of trans-aconitate. The sequence is that of Trans-aconitate 2-methyltransferase from Sinorhizobium fredii (strain NBRC 101917 / NGR234).